A 579-amino-acid polypeptide reads, in one-letter code: MNQQPLPPQSERRALAIGRAVYEAFQDYHAQFSQITARARQRFETRDWSGAREDAVARIALYDHYISECMLRLRAVLLGQAHDRALWMRARTHYAELLTGLIDQELYKTFYNTLTRRYFRTQGVDAQIEFIALDIEPTDAITVPVARHTYAVSPGRLTEMLVRVLGDYPFEVPYAHRTRCAAAIAVRLLDDLAHWGEHPVRSVELLETVFYRERRAYLVGRLFGEHRFSPCVIALVNDDAGLRAEAVLTRRSDVAQLFSNSRSYFQADLTTVGDAVVFLRSLLTHKPIDELYTMLGRAKQGKTERYRTFFRHFQAHPAEQLVHADGTPGMVMVVFTLPSYPLVFKLIRDRFAYPKTMSRAQVEGKYELVFQLDRIGRLLDAQPYRFLRFPKARFSPALLQDLQSSCAMSLSEDGDDVLIALCYVQRRLRPLNLYLREQLPAAAHAAALDYGQAIKDMARNNIFPGDMLLKNFGITRHQRAVFYDYDELCLITECTFRDWPTPTSYEEQMAAEPWFHVGPRDVFPERFALFMGLPSSQLEAVKHMHPELFDPQWWRDLQARLREDDYPDTPPYADAQKLA.

ATP is bound by residues 324-330 (ADGTPGM) and lysine 345. The active site involves aspartate 380.

This sequence belongs to the AceK family.

Its subcellular location is the cytoplasm. It carries out the reaction L-seryl-[isocitrate dehydrogenase] + ATP = O-phospho-L-seryl-[isocitrate dehydrogenase] + ADP + H(+). Its function is as follows. Bifunctional enzyme which can phosphorylate or dephosphorylate isocitrate dehydrogenase (IDH) on a specific serine residue. This is a regulatory mechanism which enables bacteria to bypass the Krebs cycle via the glyoxylate shunt in response to the source of carbon. When bacteria are grown on glucose, IDH is fully active and unphosphorylated, but when grown on acetate or ethanol, the activity of IDH declines drastically concomitant with its phosphorylation. The protein is Isocitrate dehydrogenase kinase/phosphatase of Xanthomonas campestris pv. campestris (strain 8004).